Here is a 337-residue protein sequence, read N- to C-terminus: Transaldolase (337 aa).

The Nuclear localization signal signature appears at 1–10; the sequence is MSGSPVKRQR. N6-acetyllysine is present on Lys-115. The active-site Schiff-base intermediate with substrate is the Lys-142. Lys-219 is subject to N6-acetyllysine. Phosphoserine occurs at positions 237 and 256. N6-acetyllysine is present on residues Lys-269, Lys-286, and Lys-321.

The protein belongs to the transaldolase family. Type 1 subfamily. As to quaternary structure, homodimer. Interacts with KPNA1 and KPNA4.

The protein localises to the nucleus. It localises to the cytoplasm. The catalysed reaction is D-sedoheptulose 7-phosphate + D-glyceraldehyde 3-phosphate = D-erythrose 4-phosphate + beta-D-fructose 6-phosphate. The protein operates within carbohydrate degradation; pentose phosphate pathway; D-glyceraldehyde 3-phosphate and beta-D-fructose 6-phosphate from D-ribose 5-phosphate and D-xylulose 5-phosphate (non-oxidative stage): step 2/3. In terms of biological role, catalyzes the rate-limiting step of the non-oxidative phase in the pentose phosphate pathway. Catalyzes the reversible conversion of sedheptulose-7-phosphate and D-glyceraldehyde 3-phosphate into erythrose-4-phosphate and beta-D-fructose 6-phosphate. In Cricetulus griseus (Chinese hamster), this protein is Transaldolase (TALDO1).